Reading from the N-terminus, the 4239-residue chain is Tenellin synthetase (4239 aa).

Residues 15-454 enclose the Ketosynthase family 3 (KS3) domain; the sequence is SEPIAIIGSA…GTNAHAIIER (440 aa). Catalysis depends on for beta-ketoacyl synthase activity residues Cys-189, His-326, and His-374. The malonyl-CoA:ACP transacylase (MAT) domain stretch occupies residues 589–923; that stretch reads VFTGQGAQWP…ANDAVAFSTA (335 aa). The interval 993–1135 is N-terminal hotdog fold; it reads HELLGRRTPD…GRIAVQLGAK (143 aa). Residues 993 to 1310 are dehydratase (DH) domain; that stretch reads HELLGRRTPD…GFEVRAVGEP (318 aa). The PKS/mFAS DH domain occupies 993–1313; the sequence is HELLGRRTPD…VRAVGEPDAS (321 aa). The active-site Proton acceptor; for dehydratase activity is the His-1025. Residues 1158-1313 form a C-terminal hotdog fold region; it reads LQQLDCEKLY…VRAVGEPDAS (156 aa). Catalysis depends on Asp-1217, which acts as the Proton donor; for dehydratase activity. Residues 1459-1652 form a methyltransferase (MT) domain region; that stretch reads RLYTEDKGMH…FSGVDHIVHD (194 aa). The tract at residues 2209–2382 is ketoreductase (KR) domain; it reads TYLMVGAAGG…AASIIHVGHV (174 aa). The region spanning 2502-2582 is the Carrier 1 domain; sequence EAAVAALKGF…QLSALAAKLA (81 aa). Position 2542 is an O-(pantetheine 4'-phosphoryl)serine (Ser-2542). Disordered stretches follow at residues 2587-2629 and 2642-2712; these read KKRA…EIAQ and LEAS…FFTQ. Composition is skewed to polar residues over residues 2648–2662 and 2670–2681; these read GGSS…SSVS and ESTLQSSDNNGE. Over residues 2682–2698 the composition is skewed to low complexity; sequence STPSKSSNCNSDSGSDN. Residues 2723–3169 are condensation (C) domain; that stretch reads REAPMSPAQS…SAQSVGDCVV (447 aa). The adenylation (A) (KR) domain stretch occupies residues 3203–3614; that stretch reads CQQHSTKSAI…DGTLLCFGRI (412 aa). The interval 3728–3752 is disordered; sequence EAAAATSPSNNNINNNTPSGGGGEK. Over residues 3729 to 3745 the composition is skewed to low complexity; the sequence is AAAATSPSNNNINNNTP. One can recognise a Carrier 2 domain in the interval 3751-3835; it reads EKMTVRQGEL…GMARCVAEQR (85 aa). The residue at position 3795 (Ser-3795) is an O-(pantetheine 4'-phosphoryl)serine. The tract at residues 3862–3892 is disordered; the sequence is EKLQHSSASSSSSSSSSSSAGSSSTQRPRKT. Over residues 3867–3885 the composition is skewed to low complexity; the sequence is SSASSSSSSSSSSSAGSSS. The interval 3899–4145 is reductase (RED) domain; the sequence is LTGATGFLGG…LDFGQVDKVV (247 aa).

The protein in the C-terminal section; belongs to the NRP synthetase family.

It functions in the pathway secondary metabolite biosynthesis. Functionally, hybrid PKS-NRPS synthetase; part of the gene cluster that mediates the biosynthesis of tenellin-type 2-pyridones, iron-chelating compounds involved in iron stress tolerance, competition with the natural competitor fungus Metarhizium robertsii and insect hosts infection. TenS catalyzes the assembly of the polyketide-amino acid backbone. Because tenS lacks a designated enoylreductase (ER) domain, the required activity is provided the enoyl reductase tenC. Upon formation of the polyketide backbone on the thiotemplate, the triketide is transferred to the NRPS module and linked to tyrosine to produce the pyrrolidine-2-dione intermediates, including pretellinin A, 11-hydropretellenin A, 12-hydropretellenin A, 13-hydropretellenin A, 14-hydropretellenin A, 12-oxopretellenin A and prototellinin D. The pathway begins with the assembly of the polyketide-amino acid backbone by the hybrid PKS-NRPS tenS with the help of the enoyl reductase tenC. These enzymes catalyze the synthesis of the pyrrolidine-2-dione intermediates pretellinin A, 11-hydropretellenin A, 12-hydropretellenin A, 13-hydropretellenin A, 14-hydropretellenin A, 12-oxopretellenin A and prototellinin D. The cytochrome P450 monooxygenase tenA then catalyzes an oxidative ring expansion of pretenellin A and 14-hydropretellenin A to form the 2-pyridone core, leading to pretenellin B and pyridovericin, respectively. The cytochrome P450 monooxygenase tenB is then required for the selective N-hydroxylation of the 2-pyridone nitrogen of yield tellinin and 15-hydroxytellenin (15-HT), respectively. The UDP-glucosyltransferase GT1 and the methyltransferase MT1, located outside the tenS gene cluster, contribute to the stepwise glycosylation and methylation of 15-HT to obtain the glycoside pyridovericin-N-O-(4-O-methyl-beta-D-glucopyranoside) (PMGP). Additional related compounds such as 1-O-methyl-15-HT, (8Z)-1-O-methyl-15-HT, and O-methyltenellin A are also produced but the enzymes involved in their biosynthesis have still to be determined. This Beauveria bassiana (White muscardine disease fungus) protein is Tenellin synthetase.